The primary structure comprises 361 residues: Phospho-N-acetylmuramoyl-pentapeptide-transferase (361 aa).

10 helical membrane passes run 28 to 48 (LAII…IKFL), 74 to 94 (TMGG…LADL), 99 to 119 (IWIT…DDYA), 133 to 153 (SKLL…EYLD), 168 to 188 (LSLD…VGSS), 203 to 223 (VPIA…GNLI), 236 to 256 (TGEL…FLWF), 263 to 283 (VFMG…ISVI), 288 to 308 (IVLA…ILQV), and 338 to 358 (KVVI…LSSL).

The protein belongs to the glycosyltransferase 4 family. MraY subfamily. Mg(2+) serves as cofactor.

The protein resides in the cell membrane. The enzyme catalyses UDP-N-acetyl-alpha-D-muramoyl-L-alanyl-gamma-D-glutamyl-meso-2,6-diaminopimeloyl-D-alanyl-D-alanine + di-trans,octa-cis-undecaprenyl phosphate = di-trans,octa-cis-undecaprenyl diphospho-N-acetyl-alpha-D-muramoyl-L-alanyl-D-glutamyl-meso-2,6-diaminopimeloyl-D-alanyl-D-alanine + UMP. It functions in the pathway cell wall biogenesis; peptidoglycan biosynthesis. In terms of biological role, catalyzes the initial step of the lipid cycle reactions in the biosynthesis of the cell wall peptidoglycan: transfers peptidoglycan precursor phospho-MurNAc-pentapeptide from UDP-MurNAc-pentapeptide onto the lipid carrier undecaprenyl phosphate, yielding undecaprenyl-pyrophosphoryl-MurNAc-pentapeptide, known as lipid I. This Rickettsia montanensis protein is Phospho-N-acetylmuramoyl-pentapeptide-transferase.